The following is an 869-amino-acid chain: Valine--tRNA ligase (869 aa).

The 'HIGH' region motif lies at 47-57 (PYPTGNFHIGN). The 'KMSKS' region signature appears at 521–525 (KMSKS). K524 contacts ATP.

Belongs to the class-I aminoacyl-tRNA synthetase family. ValS type 2 subfamily.

It is found in the cytoplasm. The catalysed reaction is tRNA(Val) + L-valine + ATP = L-valyl-tRNA(Val) + AMP + diphosphate. Functionally, catalyzes the attachment of valine to tRNA(Val). As ValRS can inadvertently accommodate and process structurally similar amino acids such as threonine, to avoid such errors, it has a 'posttransfer' editing activity that hydrolyzes mischarged Thr-tRNA(Val) in a tRNA-dependent manner. The polypeptide is Valine--tRNA ligase (Methanosarcina barkeri (strain Fusaro / DSM 804)).